Consider the following 644-residue polypeptide: Chaperone protein DnaK (644 aa).

A Phosphothreonine; by autocatalysis modification is found at Thr-199. Residues 550 to 584 show a composition bias toward basic and acidic residues; that stretch reads ADKLDESEKQRAQDEIKRGREAMESGDLERMKASR. 2 disordered regions span residues 550-586 and 599-644; these read ADKL…SRDS and YSQA…EDKK. Residues 600–623 are compositionally biased toward low complexity; sequence SQAGPEQGAPGAEAGAGASQGASG.

This sequence belongs to the heat shock protein 70 family.

Functionally, acts as a chaperone. This Leptospira biflexa serovar Patoc (strain Patoc 1 / Ames) protein is Chaperone protein DnaK.